The sequence spans 85 residues: Toxin BmKaIT1 (85 aa).

A signal peptide spans 1–19 (MNYLVMISFAFLLMTGVES). Residues 21 to 83 (RDAYIAQNYN…VPIRVPGKCH (63 aa)) enclose the LCN-type CS-alpha/beta domain. Intrachain disulfides connect C31–C82, C35–C55, C41–C65, and C45–C67. Positions 84 to 85 (RR) are cleaved as a propeptide — removed by a carboxypeptidase.

The protein belongs to the long (4 C-C) scorpion toxin superfamily. Sodium channel inhibitor family. Alpha subfamily. Expressed by the venom gland.

The protein localises to the secreted. In terms of biological role, alpha toxins bind voltage-independently at site-3 of sodium channels (Nav) and inhibit the inactivation of the activated channels, thereby blocking neuronal transmission. Shows a high toxicity toward insects and moderate toxicity against mammals. The chain is Toxin BmKaIT1 from Olivierus martensii (Manchurian scorpion).